The following is a 156-amino-acid chain: 3-hydroxyacyl-[acyl-carrier-protein] dehydratase FabZ (156 aa).

Residue His-62 is part of the active site.

This sequence belongs to the thioester dehydratase family. FabZ subfamily.

The protein localises to the cytoplasm. It catalyses the reaction a (3R)-hydroxyacyl-[ACP] = a (2E)-enoyl-[ACP] + H2O. Its function is as follows. Involved in unsaturated fatty acids biosynthesis. Catalyzes the dehydration of short chain beta-hydroxyacyl-ACPs and long chain saturated and unsaturated beta-hydroxyacyl-ACPs. The sequence is that of 3-hydroxyacyl-[acyl-carrier-protein] dehydratase FabZ from Parasynechococcus marenigrum (strain WH8102).